Reading from the N-terminus, the 480-residue chain is Cysteine--tRNA ligase (480 aa).

Cys-29 contacts Zn(2+). The short motif at 31-41 (VTVYDHCHIGH) is the 'HIGH' region element. The Zn(2+) site is built by Cys-209, His-234, and Glu-238. The 'KMSKS' region motif lies at 266 to 270 (KMSKS). ATP is bound at residue Lys-269.

This sequence belongs to the class-I aminoacyl-tRNA synthetase family. In terms of assembly, monomer. Zn(2+) is required as a cofactor.

Its subcellular location is the cytoplasm. The catalysed reaction is tRNA(Cys) + L-cysteine + ATP = L-cysteinyl-tRNA(Cys) + AMP + diphosphate. The polypeptide is Cysteine--tRNA ligase (Geobacter sp. (strain M21)).